The following is a 777-amino-acid chain: C6 finger domain transcription factor adaR (777 aa).

The segment at 1–20 (MEQRSSPARSLPPRKTTTTP) is disordered. A DNA-binding region (zn(2)-C6 fungal-type) is located at residues 24-50 (CELCRKRKVKCDKLTPCTNCAASGTVC). Disordered stretches follow at residues 61–85 (GRHA…TDRI), 111–144 (NSHS…NPNT), 182–213 (SSLA…VLGL), 419–440 (PQHI…PNRE), 468–496 (RKVD…DPSW), and 655–699 (LPPS…PTGS). Positions 475–489 (PTPTSSTSGTSTSRS) are enriched in low complexity. A compositionally biased stretch (pro residues) spans 668–677 (ATPPTFPGVP).

It localises to the nucleus. Transcription factor that specifically regulates the expression of the ada gene cluster involved in the biosynthesis of the linear tetracyclic TAN-1612 neuropeptide Y receptor antagonist. The protein is C6 finger domain transcription factor adaR of Aspergillus niger (strain ATCC MYA-4892 / CBS 513.88 / FGSC A1513).